Here is a 454-residue protein sequence, read N- to C-terminus: Prenyltransferase nscD (454 aa).

This sequence belongs to the tryptophan dimethylallyltransferase family.

Its pathway is secondary metabolite biosynthesis. In terms of biological role, prenyltransferase; part of the gene cluster that mediates the biosynthesis of neosartoricin, a prenylated anthracenone that exhibits T-cell antiproliferative activity, suggestive of a physiological role as an immunosuppressive agent. The non-reducing polyketide synthase nscA probably synthesizes and cyclizes the decaketide backbone. The hydrolase nscB then mediates the product release through hydrolysis followed by spontaneous decarboxylation. The prenyltransferase nscD catalyzes the addition of the dimethylallyl group to the aromatic C5. The FAD-dependent monooxygenase nscC is then responsible for the stereospecific hydroxylation at C2. There is no gene encoding O-acetyltransferase in the nsc gene cluster; thus, the last step of 2-O-acetylation leading to neosartoricin may be catalyzed by an unidentified O-acetyltransferase. This Neosartorya fischeri (strain ATCC 1020 / DSM 3700 / CBS 544.65 / FGSC A1164 / JCM 1740 / NRRL 181 / WB 181) (Aspergillus fischerianus) protein is Prenyltransferase nscD.